A 214-amino-acid polypeptide reads, in one-letter code: 3-isopropylmalate dehydratase small subunit (214 aa).

This sequence belongs to the LeuD family. LeuD type 1 subfamily. Heterodimer of LeuC and LeuD.

It catalyses the reaction (2R,3S)-3-isopropylmalate = (2S)-2-isopropylmalate. Its pathway is amino-acid biosynthesis; L-leucine biosynthesis; L-leucine from 3-methyl-2-oxobutanoate: step 2/4. In terms of biological role, catalyzes the isomerization between 2-isopropylmalate and 3-isopropylmalate, via the formation of 2-isopropylmaleate. The chain is 3-isopropylmalate dehydratase small subunit from Pseudomonas putida (strain W619).